A 186-amino-acid chain; its full sequence is ATP synthase subunit b 3 (186 aa).

Residues 5–25 (LLPALLTFSATPALAAKGPFF) traverse the membrane as a helical segment.

This sequence belongs to the ATPase B chain family. As to quaternary structure, F-type ATPases have 2 components, F(1) - the catalytic core - and F(0) - the membrane proton channel. F(1) has five subunits: alpha(3), beta(3), gamma(1), delta(1), epsilon(1). F(0) has three main subunits: a(1), b(2) and c(10-14). The alpha and beta chains form an alternating ring which encloses part of the gamma chain. F(1) is attached to F(0) by a central stalk formed by the gamma and epsilon chains, while a peripheral stalk is formed by the delta and b chains.

Its subcellular location is the cell inner membrane. Functionally, f(1)F(0) ATP synthase produces ATP from ADP in the presence of a proton or sodium gradient. F-type ATPases consist of two structural domains, F(1) containing the extramembraneous catalytic core and F(0) containing the membrane proton channel, linked together by a central stalk and a peripheral stalk. During catalysis, ATP synthesis in the catalytic domain of F(1) is coupled via a rotary mechanism of the central stalk subunits to proton translocation. In terms of biological role, component of the F(0) channel, it forms part of the peripheral stalk, linking F(1) to F(0). The sequence is that of ATP synthase subunit b 3 from Dinoroseobacter shibae (strain DSM 16493 / NCIMB 14021 / DFL 12).